A 429-amino-acid polypeptide reads, in one-letter code: Enolase (429 aa).

Gln-163 is a binding site for (2R)-2-phosphoglycerate. Glu-205 serves as the catalytic Proton donor. Mg(2+) contacts are provided by Asp-242, Glu-286, and Asp-313. Positions 338, 367, 368, and 389 each coordinate (2R)-2-phosphoglycerate. Catalysis depends on Lys-338, which acts as the Proton acceptor.

The protein belongs to the enolase family. Mg(2+) serves as cofactor.

Its subcellular location is the cytoplasm. The protein localises to the secreted. It is found in the cell surface. It carries out the reaction (2R)-2-phosphoglycerate = phosphoenolpyruvate + H2O. It functions in the pathway carbohydrate degradation; glycolysis; pyruvate from D-glyceraldehyde 3-phosphate: step 4/5. In terms of biological role, catalyzes the reversible conversion of 2-phosphoglycerate (2-PG) into phosphoenolpyruvate (PEP). It is essential for the degradation of carbohydrates via glycolysis. In Citrifermentans bemidjiense (strain ATCC BAA-1014 / DSM 16622 / JCM 12645 / Bem) (Geobacter bemidjiensis), this protein is Enolase.